We begin with the raw amino-acid sequence, 369 residues long: Anhydro-N-acetylmuramic acid kinase (369 aa).

Position 12–19 (12–19) interacts with ATP; the sequence is GTSMDGVD.

It belongs to the anhydro-N-acetylmuramic acid kinase family.

It carries out the reaction 1,6-anhydro-N-acetyl-beta-muramate + ATP + H2O = N-acetyl-D-muramate 6-phosphate + ADP + H(+). It participates in amino-sugar metabolism; 1,6-anhydro-N-acetylmuramate degradation. The protein operates within cell wall biogenesis; peptidoglycan recycling. Catalyzes the specific phosphorylation of 1,6-anhydro-N-acetylmuramic acid (anhMurNAc) with the simultaneous cleavage of the 1,6-anhydro ring, generating MurNAc-6-P. Is required for the utilization of anhMurNAc either imported from the medium or derived from its own cell wall murein, and thus plays a role in cell wall recycling. The sequence is that of Anhydro-N-acetylmuramic acid kinase from Shewanella sp. (strain MR-7).